Reading from the N-terminus, the 93-residue chain is Acylphosphatase (93 aa).

In terms of domain architecture, Acylphosphatase-like spans 5-93; that stretch reads TAILRVTGFV…EDRKTFDIVY (89 aa). Active-site residues include arginine 20 and asparagine 38.

Belongs to the acylphosphatase family.

The enzyme catalyses an acyl phosphate + H2O = a carboxylate + phosphate + H(+). The polypeptide is Acylphosphatase (acyP) (Listeria welshimeri serovar 6b (strain ATCC 35897 / DSM 20650 / CCUG 15529 / CIP 8149 / NCTC 11857 / SLCC 5334 / V8)).